The chain runs to 735 residues: Disintegrin and metalloproteinase domain-containing protein 2 (735 aa).

The N-terminal stretch at 1-16 (MWRVLFLLSGLGGLRM) is a signal peptide. A propeptide spanning residues 17–174 (DSNFDSLPVQ…FKLQSVEPQQ (158 aa)) is cleaved from the precursor. Residues N122 and N220 are each glycosylated (N-linked (GlcNAc...) asparagine). Topologically, residues 175-686 (DFAKYIEMHV…ENIYHSKPMR (512 aa)) are extracellular. A Peptidase M12B domain is found at 178 to 375 (KYIEMHVIVE…QKSQCLHNQP (198 aa)). Cystine bridges form between C287/C370, C329/C354, C331/C336, and C445/C465. N353, N459, and N566 each carry an N-linked (GlcNAc...) asparagine glycan. A Disintegrin domain is found at 384-473 (QAVCGNAKLE…SCPENHYVQT (90 aa)). One can recognise an EGF-like domain in the interval 612-645 (LGYDCTTDKCNDRGVCNNKKHCHCSASYLPPDCS). 3 cysteine pairs are disulfide-bonded: C616-C627, C621-C633, and C635-C644. The helical transmembrane segment at 687-707 (WPFFLFIPFFIIFCVLIAIMV) threads the bilayer. At 708 to 735 (KVNFQRKKWRTEDYSSDEQPESESEPKG) the chain is on the cytoplasmic side. S729 is subject to Phosphoserine.

In terms of processing, the prodomain and the metalloprotease domain are cleaved during the epididymal maturation of the spermatozoa. Expressed specifically in spermatogenic cells in the seminiferous cells. Not detected in fetal tissues.

It localises to the membrane. Functionally, sperm surface membrane protein that may be involved in sperm-egg plasma membrane adhesion and fusion during fertilization. Could have a direct role in sperm-zona binding or migration of sperm from the uterus into the oviduct. Interactions with egg membrane could be mediated via binding between its disintegrin-like domain to one or more integrins receptors on the egg. This is a non catalytic metalloprotease-like protein. The sequence is that of Disintegrin and metalloproteinase domain-containing protein 2 (ADAM2) from Homo sapiens (Human).